The primary structure comprises 423 residues: Myb-like protein G (423 aa).

An HTH myb-type domain is found at 36–90 (TISKQRENWTDEEHQKFLEALTLFDRDWKKIESFVGSKTVIQIRSHAQKYFIKVQ). The segment at residues 63–86 (WKKIESFVGSKTVIQIRSHAQKYF) is a DNA-binding region (H-T-H motif). Disordered stretches follow at residues 93–116 (NTGE…QKQK), 177–205 (QQAV…GTTL), and 284–372 (ISPR…LGNY). Over residues 177–202 (QQAVTTAQSSQRNGGLPPNPSSNNGG) the composition is skewed to low complexity. Residues 286-295 (PRNSTGNINV) are compositionally biased toward polar residues. The segment covering 302–354 (NNSNNNNNNNNNNNNNNNNNNNNNNNNNNNNNNNNNNNNNNNNNNNNNNNNNN) has biased composition (low complexity). Over residues 361 to 372 (QNHSNMVNLGNY) the composition is skewed to polar residues.

Its subcellular location is the nucleus. The protein is Myb-like protein G (mybG) of Dictyostelium discoideum (Social amoeba).